A 128-amino-acid polypeptide reads, in one-letter code: Aspartate 1-decarboxylase (128 aa).

Catalysis depends on S25, which acts as the Schiff-base intermediate with substrate; via pyruvic acid. A Pyruvic acid (Ser) modification is found at S25. Residue T57 coordinates substrate. Y58 serves as the catalytic Proton donor. 73 to 75 is a substrate binding site; the sequence is GSA.

It belongs to the PanD family. As to quaternary structure, heterooctamer of four alpha and four beta subunits. Pyruvate serves as cofactor. In terms of processing, is synthesized initially as an inactive proenzyme, which is activated by self-cleavage at a specific serine bond to produce a beta-subunit with a hydroxyl group at its C-terminus and an alpha-subunit with a pyruvoyl group at its N-terminus.

Its subcellular location is the cytoplasm. The catalysed reaction is L-aspartate + H(+) = beta-alanine + CO2. It participates in cofactor biosynthesis; (R)-pantothenate biosynthesis; beta-alanine from L-aspartate: step 1/1. Functionally, catalyzes the pyruvoyl-dependent decarboxylation of aspartate to produce beta-alanine. The sequence is that of Aspartate 1-decarboxylase from Burkholderia ambifaria (strain ATCC BAA-244 / DSM 16087 / CCUG 44356 / LMG 19182 / AMMD) (Burkholderia cepacia (strain AMMD)).